A 467-amino-acid chain; its full sequence is Argininosuccinate lyase (467 aa).

The protein belongs to the lyase 1 family. Argininosuccinate lyase subfamily.

It is found in the cytoplasm. It carries out the reaction 2-(N(omega)-L-arginino)succinate = fumarate + L-arginine. Its pathway is amino-acid biosynthesis; L-arginine biosynthesis; L-arginine from L-ornithine and carbamoyl phosphate: step 3/3. The chain is Argininosuccinate lyase from Rhizobium etli (strain ATCC 51251 / DSM 11541 / JCM 21823 / NBRC 15573 / CFN 42).